Here is a 638-residue protein sequence, read N- to C-terminus: Probable glycerol-3-phosphate dehydrogenase, mitochondrial (638 aa).

Residue 100–128 (DLIVIGGGATGTGVALDAQSRGMKVALFE) participates in FAD binding.

It belongs to the FAD-dependent glycerol-3-phosphate dehydrogenase family. FAD is required as a cofactor.

It is found in the mitochondrion. The catalysed reaction is a quinone + sn-glycerol 3-phosphate = dihydroxyacetone phosphate + a quinol. The protein operates within polyol metabolism; glycerol degradation via glycerol kinase pathway; glycerone phosphate from sn-glycerol 3-phosphate (anaerobic route): step 1/1. The polypeptide is Probable glycerol-3-phosphate dehydrogenase, mitochondrial (Dictyostelium discoideum (Social amoeba)).